The primary structure comprises 67 residues: ATP synthase F(0) complex subunit 8 (67 aa).

A helical membrane pass occupies residues 8 to 24 (TWFITITSMIMTLFILF). Lys54 is subject to N6-acetyllysine; alternate. At Lys54 the chain carries N6-succinyllysine; alternate. Lys57 carries the N6-acetyllysine modification.

The protein belongs to the ATPase protein 8 family. In terms of assembly, component of the ATP synthase complex composed at least of ATP5F1A/subunit alpha, ATP5F1B/subunit beta, ATP5MC1/subunit c (homooctomer), MT-ATP6/subunit a, MT-ATP8/subunit 8, ATP5ME/subunit e, ATP5MF/subunit f, ATP5MG/subunit g, ATP5MK/subunit k, ATP5MJ/subunit j, ATP5F1C/subunit gamma, ATP5F1D/subunit delta, ATP5F1E/subunit epsilon, ATP5PF/subunit F6, ATP5PB/subunit b, ATP5PD/subunit d, ATP5PO/subunit OSCP. ATP synthase complex consists of a soluble F(1) head domain (subunits alpha(3) and beta(3)) - the catalytic core - and a membrane F(0) domain - the membrane proton channel (subunits c, a, 8, e, f, g, k and j). These two domains are linked by a central stalk (subunits gamma, delta, and epsilon) rotating inside the F1 region and a stationary peripheral stalk (subunits F6, b, d, and OSCP). Interacts with PRICKLE3.

The protein resides in the mitochondrion membrane. In terms of biological role, subunit 8, of the mitochondrial membrane ATP synthase complex (F(1)F(0) ATP synthase or Complex V) that produces ATP from ADP in the presence of a proton gradient across the membrane which is generated by electron transport complexes of the respiratory chain. ATP synthase complex consist of a soluble F(1) head domain - the catalytic core - and a membrane F(1) domain - the membrane proton channel. These two domains are linked by a central stalk rotating inside the F(1) region and a stationary peripheral stalk. During catalysis, ATP synthesis in the catalytic domain of F(1) is coupled via a rotary mechanism of the central stalk subunits to proton translocation. In vivo, can only synthesize ATP although its ATP hydrolase activity can be activated artificially in vitro. Part of the complex F(0) domain. The polypeptide is ATP synthase F(0) complex subunit 8 (Sus scrofa (Pig)).